The chain runs to 359 residues: Molybdenum import ATP-binding protein ModC (359 aa).

In terms of domain architecture, ABC transporter spans 1 to 233; that stretch reads MSGLTVSIRG…IDAESEGGGV (233 aa). 32-39 lines the ATP pocket; sequence GHSGAGKT. The Mop domain occupies 289-355; that stretch reads AISIRNLLPV…VKAVSVDRAA (67 aa).

This sequence belongs to the ABC transporter superfamily. Molybdate importer (TC 3.A.1.8) family. The complex is composed of two ATP-binding proteins (ModC), two transmembrane proteins (ModB) and a solute-binding protein (ModA).

It is found in the cell inner membrane. It catalyses the reaction molybdate(out) + ATP + H2O = molybdate(in) + ADP + phosphate + H(+). Its function is as follows. Part of the ABC transporter complex ModABC involved in molybdenum import. Responsible for energy coupling to the transport system. The sequence is that of Molybdenum import ATP-binding protein ModC from Brucella suis biovar 1 (strain 1330).